The primary structure comprises 213 residues: MNAPTFPYDTARLSELAQLLIDNVRELAQAGWTPATSSNFSHRLDDRHAAITVSGKDKGRLIEDDIMVVDFDGQAVGRPLRPSAETLLHTQLYRRFPEIGCVLHTHSPVQTIASRLYAPQGHIRVEGYELLKAFAGNSTHEMAIDIPVFANTQDMNVLSKQVDDLLDRQNLWGYLIDGHGLYAWGRDMADARRHLEAFEFLLHCELELRKLRG.

Zn(2+) contacts are provided by His-104 and His-106.

The protein belongs to the aldolase class II family. MtnB subfamily. Requires Zn(2+) as cofactor.

The catalysed reaction is 5-(methylsulfanyl)-D-ribulose 1-phosphate = 5-methylsulfanyl-2,3-dioxopentyl phosphate + H2O. The protein operates within amino-acid biosynthesis; L-methionine biosynthesis via salvage pathway; L-methionine from S-methyl-5-thio-alpha-D-ribose 1-phosphate: step 2/6. Catalyzes the dehydration of methylthioribulose-1-phosphate (MTRu-1-P) into 2,3-diketo-5-methylthiopentyl-1-phosphate (DK-MTP-1-P). This is Methylthioribulose-1-phosphate dehydratase from Stenotrophomonas maltophilia (strain R551-3).